We begin with the raw amino-acid sequence, 269 residues long: 4-hydroxy-4-methyl-2-oxoglutarate aldolase cghB (269 aa).

His-48 acts as the Proton acceptor in catalysis. Positions 155 and 181 each coordinate a divalent metal cation. Asp-181 contacts substrate.

It belongs to the HpcH/HpaI aldolase family. In terms of assembly, homohexamer; trimer of dimers. The cofactor is Co(2+). Requires Mn(2+) as cofactor. Zn(2+) serves as cofactor. It depends on Fe(2+) as a cofactor. Mg(2+) is required as a cofactor.

The catalysed reaction is 4-hydroxy-4-methyl-2-oxoglutarate = 2 pyruvate. Its pathway is secondary metabolite biosynthesis. In terms of biological role, 4-hydroxy-4-methyl-2-oxoglutarate aldolase; part of the gene cluster that mediates the biosynthesis of the tetramic acid Sch210972, a potential anti-HIV fungal natural product that contains a decalin core. The PKS module of cghG together with the enoylreductase cghC catalyze the formation of the polyketide unit which is then conjugated to 4-hydroxyl-4-methyl glutamate (HMG) by the condensation domain of the cghG NRPS module. One unique structural feature of Sch210972 is the tetramic acid motif proposed to be derived from the non-proteinogenic amino acid HMG, by a Dieckmann-type condensation catalyzed by the reductase domain of cghG. The aldolase cghB catalyzes the aldol condensation of 2 molecules of pyruvic acid to yield the intermediate 4-hydroxyl-4-methyl-2-oxoglutarate (HMOG), which can then be stereoselectively transaminated by an unidentified enzyme to form HMG. The Diels-Alderase cghA then uses the Dieckmann product released by cghG as substrate and catalyzes the Diels-Alder cycloaddition to form the decalin ring of Sch210972. CghA also suppresses the nonenzymatic formation of the alternative stereoisomer. In Chaetomium globosum (strain ATCC 6205 / CBS 148.51 / DSM 1962 / NBRC 6347 / NRRL 1970) (Soil fungus), this protein is 4-hydroxy-4-methyl-2-oxoglutarate aldolase cghB.